The sequence spans 2364 residues: Cytotoxin-L (2364 aa).

The segment at M1 to L91 is four-helical bundle. The GT44 domain maps to K96–L468. Residues K96–L468 are glucosyltransferase region. UDP-alpha-D-glucose contacts are provided by residues I101–I103, N139, L265–D270, and D286–D288. 3 residues coordinate Mg(2+): D288, E515, and S518. Residue S518–W520 participates in UDP-alpha-D-glucose binding. The tract at residues G544–T799 is autoprocessing region. Residues E545 and D546 each contribute to the Zn(2+) site. Positions L567–S774 constitute a Peptidase C80 domain. The 1D-myo-inositol hexakisphosphate site is built by Y577, K600, and K647. Position 653 (H653) interacts with Zn(2+). H653 (for protease activity) is an active-site residue. Catalysis depends on C698, which acts as the Nucleophile; for protease activity. H757 is a binding site for Zn(2+). Positions 764, 775, and 792 each coordinate 1D-myo-inositol hexakisphosphate. A translocation region region spans residues L800–P1500. 5 interaction with host SEMA6A and SEMA6B regions span residues C1433 to E1438, D1466 to Y1471, F1484 to R1495, N1504 to K1511, and Y1596 to P1601. Cell wall-binding repeat units follow at residues E1813–M1832, V1833–N1852, I1854–G1873, S1876–L1895, F1926–A1945, A1946–E1965, L1967–M1986, Q1987–M2006, Q2007–R2026, Y2057–A2076, V2077–E2097, C2099–R2118, Q2119–I2138, E2139–V2158, E2209–P2224, K2227–M2249, R2250–M2269, Q2270–M2289, Y2320–A2339, and A2340–E2359. The tract at residues G1835–E2364 is receptor-binding (CROPS) region.

The protein belongs to the clostridial glucosylating toxin (LCGT) family. In terms of assembly, homomultimer; forms an inactive homomultimer at pH 8, which dissociates at pH 4, leading to cytotoxicity. Interacts with host SEMA6A; interaction promotes toxin entry into host cell. Interacts with host SEMA6B; interaction promotes toxin entry into host cell. Zn(2+) serves as cofactor. It depends on Mn(2+) as a cofactor. Requires Mg(2+) as cofactor. Post-translationally, undergoes autocatalytic cleavage to release the N-terminal part (Glucosyltransferase TcsL), which constitutes the active part of the toxin, in the host cytosol. 1D-myo-inositol hexakisphosphate-binding (InsP6) activates the peptidase C80 domain and promotes autoprocessing.

Its subcellular location is the secreted. The protein localises to the host endosome membrane. It is found in the host cytoplasm. It localises to the host cytosol. The protein resides in the host cell membrane. It catalyses the reaction L-threonyl-[protein] + UDP-alpha-D-glucose = 3-O-(alpha-D-glucosyl)-L-threonyl-[protein] + UDP + H(+). Protease activity is activated upon binding to 1D-myo-inositol hexakisphosphate (InsP6), which induces conformational reorganization. In terms of biological role, precursor of a cytotoxin that targets the vascular endothelium, inducing an anti-inflammatory effect and resulting in lethal toxic shock syndrome. TcsL constitutes the main toxin that mediates the pathology of P.sordellii infection, an anaerobic Gram-positive bacterium found in soil and in the gastrointestinal and vaginal tracts of animals and humans; although the majority of carriers are asymptomatic, pathogenic P.sordellii infections arise rapidly and are highly lethal. This form constitutes the precursor of the toxin: it enters into host cells and mediates autoprocessing to release the active toxin (Glucosyltransferase TcsL) into the host cytosol. Targets vascular endothelium by binding to the semaphorin proteins SEMA6A and SEMA6B, and enters host cells via clathrin-mediated endocytosis. Once entered into host cells, acidification in the endosome promotes the membrane insertion of the translocation region and formation of a pore, leading to translocation of the GT44 and peptidase C80 domains across the endosomal membrane. This activates the peptidase C80 domain and autocatalytic processing, releasing the N-terminal part (Glucosyltransferase TcsL), which constitutes the active part of the toxin, in the cytosol. Functionally, active form of the toxin, which is released into the host cytosol following autoprocessing and inactivates small GTPases. Acts by mediating monoglucosylation of small GTPases of the Ras (H-Ras/HRAS, K-Ras/KRAS and N-Ras/NRAS) family in host cells at the conserved threonine residue located in the switch I region ('Thr-37/35'), using UDP-alpha-D-glucose as the sugar donor. Also able to catalyze monoglucosylation of some members of the Rho family (Rac1 and Rap2A), but with less efficiency than with Ras proteins. Monoglucosylation of host small GTPases completely prevents the recognition of the downstream effector, blocking the GTPases in their inactive form and leading to apoptosis. Induces an anti-inflammatory effect, mainly by inactivating Ras proteins which results in blockage of the cell cycle and killing of immune cells. The absence or moderate local inflammatory response allows C.sordellii spreading in deep tissues, production of toxin which is released in the general circulation and causes a toxic shock syndrome. The protein is Cytotoxin-L of Paraclostridium sordellii (strain ATCC 9714 / DSM 2141 / JCM 3814 / LMG 15708 / NCIMB 10717 / 211) (Clostridium sordellii).